A 199-amino-acid chain; its full sequence is V-type proton ATPase subunit E (199 aa).

The protein belongs to the V-ATPase E subunit family.

Produces ATP from ADP in the presence of a proton gradient across the membrane. The chain is V-type proton ATPase subunit E from Clostridium botulinum (strain Loch Maree / Type A3).